Consider the following 167-residue polypeptide: Ureidoglycolate lyase (167 aa).

It belongs to the ureidoglycolate lyase family. In terms of assembly, homodimer. Requires Ni(2+) as cofactor.

The enzyme catalyses (S)-ureidoglycolate = urea + glyoxylate. Its pathway is nitrogen metabolism; (S)-allantoin degradation. Catalyzes the catabolism of the allantoin degradation intermediate (S)-ureidoglycolate, generating urea and glyoxylate. Involved in the utilization of allantoin as nitrogen source. The sequence is that of Ureidoglycolate lyase from Pseudomonas fluorescens (strain Pf0-1).